A 354-amino-acid polypeptide reads, in one-letter code: Guanine nucleotide-binding protein G(i) subunit alpha-3 (354 aa).

Glycine 2 carries N-myristoyl glycine lipidation. The S-palmitoyl cysteine moiety is linked to residue cysteine 3. The G-alpha domain maps to 32-354 (KEVKLLLLGA…KNNLKECGLY (323 aa)). A G1 motif region spans residues 35-48 (KLLLLGAGESGKST). 18 residues coordinate GTP: glycine 42, glutamate 43, serine 44, glycine 45, lysine 46, serine 47, threonine 48, aspartate 150, serine 151, leucine 175, arginine 176, threonine 177, arginine 178, valine 179, lysine 180, threonine 181, valine 201, and glycine 203. Residues glutamate 43, serine 44, glycine 45, lysine 46, serine 47, and threonine 48 each contribute to the GDP site. Serine 47 lines the Mg(2+) pocket. Residues serine 151, leucine 175, arginine 176, threonine 177, and arginine 178 each contribute to the GDP site. The G2 motif stretch occupies residues 173 to 181 (DVLRTRVKT). An ADP-ribosylarginine; by cholera toxin modification is found at arginine 178. Threonine 181 is a binding site for Mg(2+). Positions 196-205 (FKMFDVGGQR) are G3 motif. Glutamine 204 bears the Deamidated glutamine; by Photorhabdus PAU_02230 mark. The segment at 265–272 (ILFLNKKD) is G4 motif. Positions 269, 270, 272, 273, 325, 326, and 327 each coordinate GTP. Residues asparagine 269, lysine 270, and aspartate 272 each contribute to the GDP site. Positions 324–329 (TCATDT) are G5 motif. GDP contacts are provided by cysteine 325 and alanine 326. Cysteine 351 carries the post-translational modification ADP-ribosylcysteine; by pertussis toxin.

The protein belongs to the G-alpha family. G(i/o/t/z) subfamily. In terms of assembly, heterotrimeric G proteins are composed of 3 units; alpha, beta and gamma. The alpha subunit contains the guanine nucleotide binding site. GTP binding causes dissociation of the heterotrimer, liberating the individual subunits so that they can interact with downstream effector proteins. Forms a complex with CCDC88A/GIV and EGFR which leads to enhanced EGFR signaling and triggering of cell migration; ligand stimulation is required for recruitment of GNAI3 to the complex. Interacts (inactive GDP-bound form) with CCDC88A/GIV (via GBA motif); the interaction leads to activation of GNAI3. Interacts (inactive GDP-bound form) with CCDC88C/DAPLE (via GBA motif); the interaction leads to activation of GNAI3. Interacts (inactive GDP-bound form) with NUCB1 (via GBA motif) and NUCB2 (via GBA motif); the interaction leads to activation of GNAI3. Interacts (inactive GDP-bound form) with PLCD4 (via GBA motif); the interaction leads to activation of GNAI3. Interacts with INSR; the interaction is probably mediated by CCDC88A/GIV. Interacts with GPSM1. Interacts (GDP-bound form) with GPSM2 (via GoLoco domains). Does not interact with RGS2. Interacts with RGS8 and RGS10; this strongly enhances the intrinsic GTPase activity. Interacts with RGS16; this strongly enhances the intrinsic GTPase activity. Interacts with RGS12. Interacts (via active GTP- or inactive GDP-bound form) with RGS14. Interacts (via active GTP-bound form) with TRPC5 (via ANK repeats) in a homotetrameric ion channel; the interaction is direct and activates the channel activity. Post-translationally, (Microbial infection) Deamidated at Gln-204 by Photorhabdus asymbiotica toxin PAU_02230, blocking GTP hydrolysis of heterotrimeric GNAQ or GNA11 and G-alphai (GNAI1, GNAI2 or GNAI3) proteins, thereby activating RhoA.

The protein localises to the cytoplasm. It is found in the cell membrane. Its subcellular location is the cytoskeleton. The protein resides in the microtubule organizing center. It localises to the centrosome. Its function is as follows. Heterotrimeric guanine nucleotide-binding proteins (G proteins) function as transducers downstream of G protein-coupled receptors (GPCRs) in numerous signaling cascades. The alpha chain contains the guanine nucleotide binding site and alternates between an active, GTP-bound state and an inactive, GDP-bound state. Signaling by an activated GPCR promotes GDP release and GTP binding. The alpha subunit has a low GTPase activity that converts bound GTP to GDP, thereby terminating the signal. Both GDP release and GTP hydrolysis are modulated by numerous regulatory proteins. Signaling is mediated via effector proteins, such as adenylate cyclase. Inhibits adenylate cyclase activity, leading to decreased intracellular cAMP levels. Stimulates the activity of receptor-regulated K(+) channels. The active GTP-bound form prevents the association of RGS14 with centrosomes and is required for the translocation of RGS14 from the cytoplasm to the plasma membrane. May play a role in cell division. The active GTP-bound form activates the calcium permeant TRPC5 ion channels. The polypeptide is Guanine nucleotide-binding protein G(i) subunit alpha-3 (GNAI3) (Homo sapiens (Human)).